Reading from the N-terminus, the 125-residue chain is Photoactive yellow protein (125 aa).

In terms of domain architecture, PAS spans 23-86 (IDDLAFGAIQ…GRFREGVANG (64 aa)). Cys69 carries the S-(4-hydroxycinnamyl)cysteine modification.

It belongs to the photoactive yellow protein family. In terms of processing, the 4-hydroxycinnamic acid (p-coumaric acid) chromophore is covalently bound via a thioester linkage.

Functionally, this photoactive protein is a photoreceptor with kinetics similar to that of rhodopsin. The chain is Photoactive yellow protein (pyp) from Rhodothalassium salexigens (Rhodospirillum salexigens).